The chain runs to 188 residues: Mitochondrial import inner membrane translocase subunit TIM23-2 (188 aa).

The next 4 membrane-spanning stretches (helical) occupy residues 64 to 84 (TGTAYLGGSVAGASVGVITGV), 112 to 131 (GNRIGIIGLVYAGIESGIVA), 138 to 154 (VWTSVVAGLGTGAVCRA), and 161 to 178 (AAVAGALGGLAAGAVVAG).

It belongs to the Tim17/Tim22/Tim23 family. Homomultimer. Component of the TIM17:23 complex at least composed of TIM23, TIM17 and TIM50. The complex interacts with the TIM44 component of the PAM complex. Also part of the NADH-ubiquinone oxidoreductase complex I. Interacts with OEP163, TIM17-2, TIM21, TIM50 and MPPA2. Expressed in roots and young cotyledons. Detected in leaves and flowers.

It is found in the mitochondrion inner membrane. Essential component of the TIM17:23 complex, a complex that mediates the translocation of transit peptide-containing proteins across the mitochondrial inner membrane. Links the inner and outer membranes. This Arabidopsis thaliana (Mouse-ear cress) protein is Mitochondrial import inner membrane translocase subunit TIM23-2 (TIM23-2).